Here is a 128-residue protein sequence, read N- to C-terminus: Phosphoribosyl-AMP cyclohydrolase (128 aa).

Asp79 is a binding site for Mg(2+). Residue Cys80 coordinates Zn(2+). Positions 81 and 83 each coordinate Mg(2+). Zn(2+)-binding residues include Cys97 and Cys104.

The protein belongs to the PRA-CH family. As to quaternary structure, homodimer. It depends on Mg(2+) as a cofactor. Requires Zn(2+) as cofactor.

It is found in the cytoplasm. The enzyme catalyses 1-(5-phospho-beta-D-ribosyl)-5'-AMP + H2O = 1-(5-phospho-beta-D-ribosyl)-5-[(5-phospho-beta-D-ribosylamino)methylideneamino]imidazole-4-carboxamide. The protein operates within amino-acid biosynthesis; L-histidine biosynthesis; L-histidine from 5-phospho-alpha-D-ribose 1-diphosphate: step 3/9. In terms of biological role, catalyzes the hydrolysis of the adenine ring of phosphoribosyl-AMP. The protein is Phosphoribosyl-AMP cyclohydrolase of Saccharophagus degradans (strain 2-40 / ATCC 43961 / DSM 17024).